Here is a 160-residue protein sequence, read N- to C-terminus: Putative NrdI-like protein (160 aa).

This sequence belongs to the NrdI family.

This Streptococcus pyogenes serotype M6 (strain ATCC BAA-946 / MGAS10394) protein is Putative NrdI-like protein.